The following is a 63-amino-acid chain: Cecropin-A1 (63 aa).

Residues 1 to 23 form the signal peptide; the sequence is MNFYNIFVFVALILAITIGQSEA. The residue at position 62 (Arg-62) is an Arginine amide.

It belongs to the cecropin family.

The protein resides in the secreted. Its function is as follows. Cecropins have lytic and antibacterial activity against several Gram-positive and Gram-negative bacteria. The polypeptide is Cecropin-A1 (CecA1) (Drosophila sechellia (Fruit fly)).